The sequence spans 399 residues: Maltose excess protein 1-like, chloroplastic (399 aa).

The transit peptide at 1–67 (MSSSVSSVRL…RRRRYALPPV (67 aa)) directs the protein to the chloroplast. 9 consecutive transmembrane segments (helical) span residues 93–113 (FAGA…ILNA), 123–143 (ALFA…LSLL), 154–174 (AVIV…QLAM), 180–202 (LPQF…LNYF), 217–237 (ITIG…VPFI), 238–258 (PNSL…VVMA), 268–288 (INFV…WMPV), 306–326 (AFTM…AVFI), and 361–381 (FLAT…RDTI).

The protein localises to the plastid. It localises to the chloroplast inner membrane. Functionally, probable maltose transporter. Essential for the conversion of starch to sucrose in leaves at night, probably via the export of maltose from the chloroplast. The protein is Maltose excess protein 1-like, chloroplastic of Oryza sativa subsp. japonica (Rice).